A 338-amino-acid polypeptide reads, in one-letter code: Lumican (338 aa).

Positions 1–18 (MNVCAFSLALALVGSVSG) are cleaved as a signal peptide. Position 19 is a pyrrolidone carboxylic acid (Gln-19). Sulfotyrosine is present on residues Tyr-20, Tyr-21, Tyr-23, and Tyr-30. An LRRNT domain is found at 28-66 (FMYGQISPNCAPECNCPHSYPTAMYCDDLKLKSVPMVPP). 8 LRR repeats span residues 67 to 88 (GIKY…AFEN), 91 to 114 (DLQW…VFSK), 117 to 137 (QLKK…PLPK), 138 to 159 (SLQD…DGLV), 160 to 181 (NLTF…ASLK), 185 to 205 (SLEY…GLPT), 206 to 227 (SLLT…YFKR), and 230 to 250 (GLQY…PGNS). Residue Asn-88 is glycosylated (N-linked (GlcNAc...) (keratan sulfate) asparagine). Asn-127 carries an N-linked (GlcNAc...) (keratan sulfate) asparagine glycan. Asn-160 carries N-linked (GlcNAc...) (keratan sulfate) asparagine glycosylation. An N-linked (GlcNAc...) (keratan sulfate) asparagine glycan is attached at Asn-252. LRR repeat units lie at residues 255–276 (SLLE…NENL) and 277–296 (ENYY…SFCK). The cysteines at positions 295 and 328 are disulfide-linked. Ser-304 is subject to Phosphoserine. One copy of the LRR 11 repeat lies at 305-326 (KIKHLRLDGNPLTQSSLPPDMY).

It belongs to the small leucine-rich proteoglycan (SLRP) family. SLRP class II subfamily. Binds to laminin. Contains keratan sulfate. Post-translationally, cys-37, Cys-41, Cys-43 and Cys-53 are involved in disulfide bonds. As to expression, cornea and other tissues.

It localises to the secreted. The protein resides in the extracellular space. The protein localises to the extracellular matrix. This Mus musculus (Mouse) protein is Lumican (Lum).